We begin with the raw amino-acid sequence, 379 residues long: Probable leucine aminopeptidase TRV_05286 (379 aa).

Positions 1-18 are cleaved as a signal peptide; that stretch reads MKIATLAVVSAFAATAIA. 2 residues coordinate Zn(2+): histidine 182 and aspartate 201. Asparagine 202 and asparagine 226 each carry an N-linked (GlcNAc...) asparagine glycan. Positions 240 and 267 each coordinate Zn(2+). A disulfide bridge connects residues cysteine 312 and cysteine 316. Zn(2+) is bound at residue histidine 345.

The protein belongs to the peptidase M28 family. M28E subfamily. Monomer. Zn(2+) is required as a cofactor.

Its subcellular location is the secreted. Functionally, probable extracellular aminopeptidase which contributes to pathogenicity. This is Probable leucine aminopeptidase TRV_05286 from Trichophyton verrucosum (strain HKI 0517).